Consider the following 232-residue polypeptide: Protein INAPERTURATE POLLEN 1 homolog (232 aa).

As to quaternary structure, interacts with LECRKS7/DAF1.

The protein localises to the cytoplasm. Functionally, required for pollen aperture formation, male fertility and LECRKS7/DAF1 function. Seems to be involved in operculum protrusion. Participates in the modification of plasma membrane at future aperture sites, possibly by creating close contact between the plasma membrane and callose wall to prevent primexine formation and sporopollenin deposition. This is Protein INAPERTURATE POLLEN 1 homolog from Oryza sativa subsp. japonica (Rice).